The primary structure comprises 557 residues: Portal protein (557 aa).

It belongs to the herpesviridae portal protein family. As to quaternary structure, homododecamerizes. Interacts with terminase subunits TRM1 and TRM3.

The protein localises to the virion. The protein resides in the host nucleus. Forms a portal in the viral capsid through which viral DNA is translocated during DNA packaging. Assembles as a dodecamer at a single fivefold axe of the T=16 icosahedric capsid. Binds to the molecular motor that translocates the viral DNA, termed terminase. The polypeptide is Portal protein (43) (Connochaetes taurinus (Blue wildebeest)).